Here is a 213-residue protein sequence, read N- to C-terminus: Protein DMP3 (213 aa).

The tract at residues 1 to 27 (MSSPSSLTQRNPTSSQEQSESVPQLRR) is disordered. The next 4 membrane-spanning stretches (helical) occupy residues 45-65 (LANL…PVFT), 74-94 (TQVL…LSSF), 136-156 (IRII…AVAL), and 176-196 (VLDI…LVFP).

The protein belongs to the plant DMP1 protein family. In terms of tissue distribution, expressed in leaves, siliques and roots (e.g. root hairs).

Its subcellular location is the endoplasmic reticulum membrane. In terms of biological role, involved in membrane remodeling. This chain is Protein DMP3, found in Arabidopsis thaliana (Mouse-ear cress).